The sequence spans 475 residues: Glutamate--tRNA ligase 2 (475 aa).

The short motif at 9 to 19 is the 'HIGH' region element; sequence PSPTGFLHIGS. The 'KMSKS' region signature appears at 238 to 242; it reads KLSKR. Lysine 241 contacts ATP.

Belongs to the class-I aminoacyl-tRNA synthetase family. Glutamate--tRNA ligase type 1 subfamily. In terms of assembly, monomer.

The protein resides in the cytoplasm. It carries out the reaction tRNA(Glu) + L-glutamate + ATP = L-glutamyl-tRNA(Glu) + AMP + diphosphate. In terms of biological role, catalyzes the attachment of glutamate to tRNA(Glu) in a two-step reaction: glutamate is first activated by ATP to form Glu-AMP and then transferred to the acceptor end of tRNA(Glu). The protein is Glutamate--tRNA ligase 2 of Bartonella quintana (strain Toulouse) (Rochalimaea quintana).